A 1394-amino-acid chain; its full sequence is MKKTVFRLNFLTACISLGIVSQAWAGHTYFGIDYQYYRDFAENKGKFTVGAQNIKVYNKQGQLVGTSMTKAPMIDFSVVSRNGVAALVENQYIVSVAHNVGYTDVDFGAEGNNPDQHRFTYKIVKRNNYKKDNLHPYEDDYHNPRLHKFVTEAAPIDMTSNMNGSTYSDRTKYPERVRIGSGRQFWRNDQDKGDQVAGAYHYLTAGNTHNQRGAGNGYSYLGGDVRKAGEYGPLPIAGSKGDSGSPMFIYDAEKQKWLINGILREGNPFEGKENGFQLVRKSYFDEIFERDLHTSLYTRAGNGVYTISGNDNGQGSITQKSGIPSEIKITLANMSLPLKEKDKVHNPRYDGPNIYSPRLNNGETLYFMDQKQGSLIFASDINQGAGGLYFEGNFTVSPNSNQTWQGAGIHVSENSTVTWKVNGVEHDRLSKIGKGTLHVQAKGENKGSISVGDGKVILEQQADDQGNKQAFSEIGLVSGRGTVQLNDDKQFDTDKFYFGFRGGRLDLNGHSLTFKRIQNTDEGAMIVNHNTTQAANVTITGNESIVLPNGNNINKLDYRKEIAYNGWFGETDKNKHNGRLNLIYKPTTEDRTLLLSGGTNLKGDITQTKGKLFFSGRPTPHAYNHLNKRWSEMEGIPQGEIVWDHDWINRTFKAENFQIKGGSAVVSRNVSSIEGNWTVSNNANATFGVVPNQQNTICTRSDWTGLTTCQKVDLTDTKVINSIPKTQINGSINLTDNATANVKGLAKLNGNVTLTNHSQFTLSNNATQIGNIRLSDNSTATVDNANLNGNVHLTDSAQFSLKNSHFSHQIQGDKGTTVTLENATWTMPSDTTLQNLTLNNSTITLNSAYSASSNNTPRRRSLETETTPTSAEHRFNTLTVNGKLSGQGTFQFTSSLFGYKSDKLKLSNDAEGDYILSVRNTGKEPETLEQLTLVESKDNQPLSDKLKFTLENDHVDAGALRYKLVKNDGEFRLHNPIKEQELHNDLVRAEQAERTLEAKQVEPTAKTQTGEPKVRSRRAARAAFPDTLPDQSLLNALEAKQAELTAETQKSKAKTKKVRSKRAVFSDPLLDQSLFALEAALEVIDAPQQSEKDRLAQEEAEKQRKQKDLISRYSNSALSELSATVNSMLSVQDELDRLFVDQAQSAVWTNIAQDKRRYDSDAFRAYQQQKTNLRQIGVQKALANGRIGAVFSHSRSDNTFDEQVKNHATLTMMSGFAQYQWGDLQFGVNVGTGISASKMAEEQSRKIHRKAINYGVNASYQFRLGQLGIQPYFGVNRYFIERENYQSEEVRVKTPSLAFNRYNAGIRVDYTFTPTDNISVKPYFFVNYVDVSNANVQTTVNLTVLQQPFGRYWQKEVGLKAEILHFQISAFISKSQGSQLGKQQNVGVKLGYRW.

The first 25 residues, 1 to 25 (MKKTVFRLNFLTACISLGIVSQAWA), serve as a signal peptide directing secretion. A Peptidase S6 domain is found at 26–286 (GHTYFGIDYQ…QLVRKSYFDE (261 aa)). The active site involves S243. 2 disordered regions span residues 848–870 (AYSA…TPTS) and 995–1027 (TLEA…FPDT). Residues 1140–1394 (VDQAQSAVWT…NVGVKLGYRW (255 aa)) form the Autotransporter domain.

The protein resides in the periplasm. It localises to the secreted. It is found in the cell surface. Its subcellular location is the cell outer membrane. In terms of biological role, probable protease; promotes adherence and invasion by directly binding to a host cell structure. The polypeptide is Adhesion and penetration protein autotransporter (hap) (Haemophilus influenzae).